Reading from the N-terminus, the 658-residue chain is Endoglucanase 3 (658 aa).

The signal sequence occupies residues 1 to 23; sequence MQLKNFYPKMSVLGIATVMALTA. C24 carries the N-palmitoyl cysteine lipid modification. C24 carries S-diacylglycerol cysteine lipidation. Positions 24–265 are excised as a propeptide; sequence CGDENTQALF…TDSLFIDNIY (242 aa). Positions 42–83 are disordered; that stretch reads ENQVPVSSSDMSPTSSDAVIDPTSSSAAVVDPSTLPAEGPIT. Positions 45–58 are enriched in low complexity; that stretch reads VPVSSSDMSPTSSD. The CBM11 domain occupies 87–277; the sequence is GLGTLVDDFE…DSSEVEKDQP (191 aa). Catalysis depends on E448, which acts as the Proton donor. Catalysis depends on E597, which acts as the Nucleophile.

It belongs to the glycosyl hydrolase 5 (cellulase A) family. In terms of assembly, monomer. May be a lipoprotein and may be glycosylated.

It localises to the membrane. It carries out the reaction Endohydrolysis of (1-&gt;4)-beta-D-glucosidic linkages in cellulose, lichenin and cereal beta-D-glucans.. Functionally, exhibits both endoglucanase and cellobiosidase activities. The protein is Endoglucanase 3 (cel-3) of Fibrobacter succinogenes (strain ATCC 19169 / S85).